The sequence spans 234 residues: Sugar fermentation stimulation protein A (234 aa).

A DNA-binding region (H-T-H motif) is located at residues Leu-201–Ser-220.

Belongs to the SfsA family.

Its function is as follows. Binds to DNA non-specifically. Could be a regulatory factor involved in maltose metabolism. In Escherichia coli O127:H6 (strain E2348/69 / EPEC), this protein is Sugar fermentation stimulation protein A.